Here is a 263-residue protein sequence, read N- to C-terminus: Homeobox protein CDX-1 (263 aa).

A disordered region spans residues 47–108 (PGINSDPHHG…VQPPGSGLLP (62 aa)). Polar residues predominate over residues 82-97 (SSANPTQIAFSPSDYN). The homeobox DNA-binding region spans 150-209 (KDKYRVVYTDHQRLELEKEFHYSRYITIRRKAELAAALGLTERQVKIWFQNRRAKERKVN). An interaction with DNA region spans residues 153 to 174 (YRVVYTDHQRLELEKEFHYSRY). Residues 192–203 (RQVKIWFQNRRA) form an interaction with 5-mCpG DNA region. A compositionally biased stretch (basic residues) spans 204-213 (KERKVNKKKM). The segment at 204–263 (KERKVNKKKMQQQSQQASTTTPTPPSVGTTAGMGGLCSSSSSNSNLVSPSSMPIKEEYLS) is disordered. Composition is skewed to low complexity over residues 214-233 (QQQS…VGTT) and 241-254 (SSSS…SPSS).

Belongs to the Caudal homeobox family.

The protein localises to the nucleus. Plays a role in transcriptional regulation. Involved in activated KRAS-mediated transcriptional activation of PRKD1. Binds to the PRKD1 promoter. Could play a role in the terminal differentiation of the intestine. Binds preferentially to methylated DNA. This Xenopus laevis (African clawed frog) protein is Homeobox protein CDX-1 (cdx1).